Consider the following 114-residue polypeptide: Probable 4-amino-4-deoxy-L-arabinose-phosphoundecaprenol flippase subunit ArnE (114 aa).

3 helical membrane passes run 41-61, 64-84, and 91-111; these read MWLWLAIACLGLGLLVWLLVL, MDVGIAYPMLGLNFVLITLVG, and PVDPQHWLGIALILVGVFQLG.

Belongs to the ArnE family. In terms of assembly, heterodimer of ArnE and ArnF.

The protein localises to the cell inner membrane. It functions in the pathway bacterial outer membrane biogenesis; lipopolysaccharide biosynthesis. Translocates 4-amino-4-deoxy-L-arabinose-phosphoundecaprenol (alpha-L-Ara4N-phosphoundecaprenol) from the cytoplasmic to the periplasmic side of the inner membrane. The polypeptide is Probable 4-amino-4-deoxy-L-arabinose-phosphoundecaprenol flippase subunit ArnE (Pseudomonas savastanoi pv. phaseolicola (strain 1448A / Race 6) (Pseudomonas syringae pv. phaseolicola (strain 1448A / Race 6))).